The chain runs to 309 residues: Protease HtpX homolog (309 aa).

The next 2 membrane-spanning stretches (helical) occupy residues Thr7–Gly27 and Gln29–Ser49. Position 131 (His131) interacts with Zn(2+). The active site involves Glu132. Zn(2+) is bound at residue His135. 2 helical membrane passes run Ile141–Ala161 and Ile182–Ile202. Glu207 is a Zn(2+) binding site. Residues Arg278–Arg309 are disordered.

Belongs to the peptidase M48B family. Zn(2+) serves as cofactor.

The protein resides in the cell inner membrane. The chain is Protease HtpX homolog from Desulforapulum autotrophicum (strain ATCC 43914 / DSM 3382 / VKM B-1955 / HRM2) (Desulfobacterium autotrophicum).